A 462-amino-acid polypeptide reads, in one-letter code: Argininosuccinate lyase (462 aa).

It belongs to the lyase 1 family. Argininosuccinate lyase subfamily.

It is found in the cytoplasm. The enzyme catalyses 2-(N(omega)-L-arginino)succinate = fumarate + L-arginine. The protein operates within amino-acid biosynthesis; L-arginine biosynthesis; L-arginine from L-ornithine and carbamoyl phosphate: step 3/3. This Caldicellulosiruptor saccharolyticus (strain ATCC 43494 / DSM 8903 / Tp8T 6331) protein is Argininosuccinate lyase.